The sequence spans 170 residues: CCHC-type zinc finger nucleic acid binding protein (170 aa).

Ser-2 carries the N-acetylserine modification. The CCHC-type 1 zinc finger occupies 4–21 (NECFKCGRSGHWARECPT). Lys-8 is subject to N6-acetyllysine. Omega-N-methylarginine; by PRMT1 occurs at positions 25 and 27. An RNA-binding Arg/Gly-rich region (RGG-box) region spans residues 25–33 (RGRGMRSRG). Ser-42 is modified (phosphoserine). 6 CCHC-type zinc fingers span residues 45–62 (DICY…DCDL), 65–82 (DACY…DCKE), 89–106 (QCCY…DCDH), 110–127 (QKCY…DCTK), 128–145 (VKCY…NCSK), and 149–166 (VNCY…ECTI). At Arg-72 the chain carries Omega-N-methylarginine.

In terms of assembly, associates with the 40S ribosomal subunit, the 80S ribosome and with polysomes. Post-translationally, arginine methylation by PRMT1 in the Arg/Gly-rich region impedes RNA binding.

It localises to the nucleus. Its subcellular location is the cytoplasm. The protein localises to the endoplasmic reticulum. Single-stranded DNA-binding protein that preferentially binds to the sterol regulatory element (SRE) sequence 5'-GTGCGGTG-3', and thereby mediates transcriptional repression. Has a role as transactivator of the Myc promoter. Binds single-stranded RNA in a sequence-specific manner. Binds G-rich elements in target mRNA coding sequences. Prevents G-quadruplex structure formation in vitro, suggesting a role in supporting translation by resolving stable structures on mRNAs. The chain is CCHC-type zinc finger nucleic acid binding protein (CNBP) from Bos taurus (Bovine).